Consider the following 293-residue polypeptide: Formamidopyrimidine-DNA glycosylase (293 aa).

P2 (schiff-base intermediate with DNA) is an active-site residue. The active-site Proton donor is the E3. The active-site Proton donor; for beta-elimination activity is the K58. Positions 104, 123, and 166 each coordinate DNA. The FPG-type zinc-finger motif lies at 257–293 (AAYDREGERCRTDGCGGAVKRFVQNGRSTFWCSGCQK). The Proton donor; for delta-elimination activity role is filled by R283.

Belongs to the FPG family. As to quaternary structure, monomer. Requires Zn(2+) as cofactor.

The enzyme catalyses Hydrolysis of DNA containing ring-opened 7-methylguanine residues, releasing 2,6-diamino-4-hydroxy-5-(N-methyl)formamidopyrimidine.. It carries out the reaction 2'-deoxyribonucleotide-(2'-deoxyribose 5'-phosphate)-2'-deoxyribonucleotide-DNA = a 3'-end 2'-deoxyribonucleotide-(2,3-dehydro-2,3-deoxyribose 5'-phosphate)-DNA + a 5'-end 5'-phospho-2'-deoxyribonucleoside-DNA + H(+). Involved in base excision repair of DNA damaged by oxidation or by mutagenic agents. Acts as a DNA glycosylase that recognizes and removes damaged bases. Has a preference for oxidized purines, such as 7,8-dihydro-8-oxoguanine (8-oxoG). Has AP (apurinic/apyrimidinic) lyase activity and introduces nicks in the DNA strand. Cleaves the DNA backbone by beta-delta elimination to generate a single-strand break at the site of the removed base with both 3'- and 5'-phosphates. This chain is Formamidopyrimidine-DNA glycosylase, found in Rhodopseudomonas palustris (strain BisB5).